The sequence spans 371 residues: Poly(rC)-binding protein 3 (371 aa).

3 KH domains span residues 45–95 (TLTI…TITG), 129–182 (PVTL…TISG), and 293–357 (ASTH…QYLI).

In terms of tissue distribution, widely expressed, with highest levels in testis and fat tissues and lowest in heart.

The protein localises to the cytoplasm. Single-stranded nucleic acid binding protein that binds preferentially to oligo dC. This chain is Poly(rC)-binding protein 3 (Pcbp3), found in Mus musculus (Mouse).